A 687-amino-acid chain; its full sequence is Translation initiation factor IF-2 (687 aa).

The tr-type G domain maps to 186 to 355; the sequence is KRPPIVTVMG…LLTAEMLELK (170 aa). The tract at residues 195-202 is G1; sequence GHVDHGKT. 195 to 202 is a GTP binding site; that stretch reads GHVDHGKT. Residues 220-224 are G2; that stretch reads GITQH. The segment at 241-244 is G3; that stretch reads DTPG. Residues 241–245 and 295–298 each bind GTP; these read DTPGH and NKID. The G4 stretch occupies residues 295-298; sequence NKID. Residues 331–333 are G5; that stretch reads SAK.

It belongs to the TRAFAC class translation factor GTPase superfamily. Classic translation factor GTPase family. IF-2 subfamily.

The protein localises to the cytoplasm. Functionally, one of the essential components for the initiation of protein synthesis. Protects formylmethionyl-tRNA from spontaneous hydrolysis and promotes its binding to the 30S ribosomal subunits. Also involved in the hydrolysis of GTP during the formation of the 70S ribosomal complex. The chain is Translation initiation factor IF-2 from Clostridium botulinum (strain Eklund 17B / Type B).